Reading from the N-terminus, the 304-residue chain is Non-specific ribonucleoside hydrolase RihC (304 aa).

The active site involves His-235.

Belongs to the IUNH family. RihC subfamily.

Functionally, hydrolyzes both purine and pyrimidine ribonucleosides with a broad-substrate specificity. The chain is Non-specific ribonucleoside hydrolase RihC from Salmonella paratyphi A (strain ATCC 9150 / SARB42).